Here is a 491-residue protein sequence, read N- to C-terminus: Protein DETOXIFICATION 28 (491 aa).

The next 12 helical transmembrane spans lie at 47–67, 77–97, 127–147, 160–180, 192–212, 228–248, 272–292, 302–322, 352–372, 387–407, 414–434, and 444–464; these read IVGP…ITQA, LAAI…LFIG, IVLF…TPIL, SGII…FFPI, VIAI…WLFV, VSWW…GCPL, GIMV…TGNL, MSIC…FFAG, IIGI…GWMF, ILLS…GVAV, LVAF…GIVM, and GIWA…LIFI.

Belongs to the multi antimicrobial extrusion (MATE) (TC 2.A.66.1) family.

It localises to the membrane. The protein is Protein DETOXIFICATION 28 of Arabidopsis thaliana (Mouse-ear cress).